A 349-amino-acid polypeptide reads, in one-letter code: Bifunctional protein FolKE (349 aa).

Residues 1 to 226 (MQTTYLSMGS…LFEIDSSKND (226 aa)) form a 2-amino-4-hydroxy-6-hydroxymethyldihydropteridine pyrophosphokinase region. The segment at 226–349 (DSIVLIKDIP…KRMEFLESLL (124 aa)) is GTP cyclohydrolase 1.

It in the N-terminal section; belongs to the HPPK family. In the C-terminal section; belongs to the GTP cyclohydrolase I family. As to quaternary structure, homomer.

The enzyme catalyses 6-hydroxymethyl-7,8-dihydropterin + ATP = (7,8-dihydropterin-6-yl)methyl diphosphate + AMP + H(+). The catalysed reaction is GTP + H2O = 7,8-dihydroneopterin 3'-triphosphate + formate + H(+). The protein operates within cofactor biosynthesis; 7,8-dihydroneopterin triphosphate biosynthesis; 7,8-dihydroneopterin triphosphate from GTP: step 1/1. Its pathway is cofactor biosynthesis; tetrahydrofolate biosynthesis; 2-amino-4-hydroxy-6-hydroxymethyl-7,8-dihydropteridine diphosphate from 7,8-dihydroneopterin triphosphate: step 4/4. The chain is Bifunctional protein FolKE (folKE) from Lactococcus lactis subsp. cremoris (strain MG1363).